The chain runs to 112 residues: Protein lin-52 homolog (112 aa).

This sequence belongs to the lin-52 family. In terms of assembly, component of the DREAM complex.

This is Protein lin-52 homolog (LIN52) from Gallus gallus (Chicken).